A 1129-amino-acid polypeptide reads, in one-letter code: PAN2-PAN3 deadenylation complex catalytic subunit PAN2 (1129 aa).

5 WD repeats span residues 20–60, 104–146, 148–183, 186–226, and 280–319; these read PPAV…YTSY, PDFK…DTLP, DAQY…VIKV, GHTG…FSLK, and LYDS…HFPE. The linker stretch occupies residues 320-457; the sequence is YSNPTEFADH…DLHLDDVTRK (138 aa). A disordered region spans residues 396-427; that stretch reads RTKRRNQIEVTRQTDRSSDSLTPPKFLSEKSR. The USP domain maps to 458–830; sequence DVPAMYGNVE…LPSVLTFQTK (373 aa). The Exonuclease domain maps to 880–1052; it reads VAIDAEFIRL…IEDATTALKL (173 aa). D883, E885, D992, and D1045 together coordinate a divalent metal cation. Residues 1083 to 1129 are disordered; that stretch reads APGSGNRNSMPAGMTATGAGRDTPEPMTTPKKGGAFGGVGFRSPMRR.

Belongs to the peptidase C19 family. PAN2 subfamily. As to quaternary structure, forms a heterotrimer with an asymmetric homodimer of the regulatory subunit PAN3 to form the poly(A)-nuclease (PAN) deadenylation complex. It depends on a divalent metal cation as a cofactor.

It localises to the cytoplasm. The enzyme catalyses Exonucleolytic cleavage of poly(A) to 5'-AMP.. Its activity is regulated as follows. Positively regulated by the regulatory subunit PAN3. Its function is as follows. Catalytic subunit of the poly(A)-nuclease (PAN) deadenylation complex, one of two cytoplasmic mRNA deadenylases involved in mRNA turnover. PAN specifically shortens poly(A) tails of RNA and the activity is stimulated by poly(A)-binding protein PAB1. PAN deadenylation is followed by rapid degradation of the shortened mRNA tails by the CCR4-NOT complex. Deadenylated mRNAs are then degraded by two alternative mechanisms, namely exosome-mediated 3'-5' exonucleolytic degradation, or deadenylation-dependent mRNA decaping and subsequent 5'-3' exonucleolytic degradation by XRN1. May also be involved in post-transcriptional maturation of mRNA poly(A) tails. This chain is PAN2-PAN3 deadenylation complex catalytic subunit PAN2, found in Phaeosphaeria nodorum (strain SN15 / ATCC MYA-4574 / FGSC 10173) (Glume blotch fungus).